A 312-amino-acid chain; its full sequence is Ribosomal protein L11 methyltransferase (312 aa).

Residues Thr-160, Gly-181, Asp-203, and Asn-246 each contribute to the S-adenosyl-L-methionine site.

It belongs to the methyltransferase superfamily. PrmA family.

It is found in the cytoplasm. The enzyme catalyses L-lysyl-[protein] + 3 S-adenosyl-L-methionine = N(6),N(6),N(6)-trimethyl-L-lysyl-[protein] + 3 S-adenosyl-L-homocysteine + 3 H(+). Methylates ribosomal protein L11. This Staphylococcus epidermidis (strain ATCC 12228 / FDA PCI 1200) protein is Ribosomal protein L11 methyltransferase.